The primary structure comprises 399 residues: Integral membrane protein GPR137B (399 aa).

The interval 1–22 (MRPERPRPRGSAPGPMETPPWD) is disordered. Over 1–46 (MRPERPRPRGSAPGPMETPPWDPARNDSLPPTLTPAVPPYVKLGLT) the chain is Lumenal. Asparagine 26 carries an N-linked (GlcNAc...) asparagine glycan. Residues 47–67 (VVYTVFYALLFVFIYVQLWLV) traverse the membrane as a helical segment. Residues 68–79 (LRYRHKRLSYQS) lie on the Cytoplasmic side of the membrane. A helical membrane pass occupies residues 80–100 (VFLFLCLFWASLRTVLFSFYF). At 101–111 (KDFVAANSLSP) the chain is on the lumenal side. A helical transmembrane segment spans residues 112–132 (FVFWLLYCFPVCLQFFTLTLM). Residues 133 to 159 (NLYFTQVIFKAKSKYSPELLKYRLPLY) are Cytoplasmic-facing. The chain crosses the membrane as a helical span at residues 160–180 (LASLFISLVFLLVNLTCAVLV). Topologically, residues 181 to 188 (KTGNWERK) are lumenal. A helical transmembrane segment spans residues 189 to 209 (VIVSVRVAINDTLFVLCAVSL). The Cytoplasmic portion of the chain corresponds to 210 to 237 (SICLYKISKMSLANIYLESKGSSVCQVT). A helical transmembrane segment spans residues 238–258 (AIGVTVILLYTSRACYNLFIL). Residues 259–292 (SFSQNKSVHSFDYDWYNVSDQADLKNQLGDAGYV) are Lumenal-facing. Asparagine 263 and asparagine 275 each carry an N-linked (GlcNAc...) asparagine glycan. Residues 293–313 (LFGVVLFVWELLPTTLVVYFF) form a helical membrane-spanning segment. Residues 314 to 399 (RVRNPTKDLT…TLDPDKPSLG (86 aa)) are Cytoplasmic-facing.

This sequence belongs to the GPR137 family. As to quaternary structure, interaction with RRAGA; increases RRAGA recruitment to lysosomes. Interacts with MTOR; this interaction is amino acid sensitive. As to expression, expressed in kidney, heart, brain and placenta.

It localises to the lysosome membrane. In terms of biological role, lysosomal integral membrane protein that regulates the localization and activity of mTORC1, a signaling complex promoting cell growth in response to growth factors, energy levels, and amino acids. Interacts with Rag GTPases and increases the lysosomial localization and activity of Rag GTPases and thereby regulates mTORC1 translocation and activity in lysosome. Involved in the regulation of lysosomal morphology and autophagy. Its function is as follows. Also acts as a negative regulator of osteoclast activity. Involved in interleukin-4-induced M2 macrophage polarization. The sequence is that of Integral membrane protein GPR137B (GPR137B) from Homo sapiens (Human).